A 92-amino-acid polypeptide reads, in one-letter code: mRNA interferase toxin YafQ (92 aa).

The Proton donor role is filled by His87.

This sequence belongs to the RelE toxin family. YafQ subfamily. In terms of assembly, monomer in solution, forms a heterotetramer with antitoxin DinJ, with 2 YafQ-DinJ dimers associated via the N-terminus of the DinJ antitoxins (YafQ-(DinJ)2-YafQ).

In terms of biological role, toxic component of a type II toxin-antitoxin (TA) system. A sequence-specific mRNA endoribonuclease that inhibits translation elongation and induces bacterial stasis. Cleavage occurs between the second and third residue of the Lys codon followed by a G or A (5'AAA(G/A)3'), is reading-frame dependent and occurs within the 5' end of most mRNAs. Ribosome-binding confers the sequence specificity and reading frame-dependence. The YafQ-DinJ heterotetramer binds the consensus sequence 5'-TTTGAGCTACA-3' in the dinJ promoter; DinJ also binds DNA but not as well as the YafQ-DinJ complex. In Escherichia coli (strain B / BL21-DE3), this protein is mRNA interferase toxin YafQ (yafQ).